Reading from the N-terminus, the 213-residue chain is Superoxide dismutase [Fe] (213 aa).

H26, H73, D156, and H160 together coordinate Fe cation.

This sequence belongs to the iron/manganese superoxide dismutase family. Homodimer. It depends on Fe cation as a cofactor.

The catalysed reaction is 2 superoxide + 2 H(+) = H2O2 + O2. In terms of biological role, destroys superoxide anion radicals which are normally produced within the cells and which are toxic to biological systems. The sequence is that of Superoxide dismutase [Fe] (sodB) from Helicobacter pylori (strain J99 / ATCC 700824) (Campylobacter pylori J99).